A 332-amino-acid polypeptide reads, in one-letter code: Potassium channel subfamily K member 17 (332 aa).

The Cytoplasmic segment spans residues 1 to 20 (MYRPRARAAPEGRVRGCAVP). The chain crosses the membrane as a helical span at residues 21 to 43 (STVLLLLAYLAYLALGTGVFWTL). N-linked (GlcNAc...) asparagine glycosylation is found at asparagine 65 and asparagine 94. The pore-forming intramembrane region spans 106–124 (SFFFSVSTITTIGYGNLSP). 4 residues coordinate K(+): threonine 116, isoleucine 117, glycine 118, and tyrosine 119. The selectivity filter 1 stretch occupies residues 116–121 (TIGYGN). Residues 128-148 (AARLFCIFFALVGIPLNLVVL) traverse the membrane as a helical segment. Over 149-179 (NRLGHLMQQGVNHWASRLGGTWQDPDKARWL) the chain is Cytoplasmic. Residues 180-200 (AGSGALLSGLLLFLLLPPLLF) traverse the membrane as a helical segment. The pore-forming intramembrane region spans 211 to 230 (GFYFAFITLSTVGFGDYVIG). Threonine 221, valine 222, glycine 223, and phenylalanine 224 together coordinate K(+). The segment at 221-226 (TVGFGD) is selectivity filter 2. The helical transmembrane segment at 244-264 (MVSLWILFGMAWLALIIKLIL) threads the bilayer. Residues 265-332 (SQLETPGRVC…AHAAGCGKDS (68 aa)) are Cytoplasmic-facing. Positions 287 to 312 (SQSWRQGPDREPESHSPQQGCYPEGP) are disordered.

This sequence belongs to the two pore domain potassium channel (TC 1.A.1.8) family. Homodimer; disulfide-linked. Heterodimer with KCNK5 and KCNK16. As to expression, widely expressed. Highly expressed in aorta and coronary artery. Expressed in pancreas, in both endocrine (alpha, beta, gamma, delta, and epsilon) and exocrine (acinar and ductal) cells.

It localises to the cell membrane. It carries out the reaction K(+)(in) = K(+)(out). It catalyses the reaction Rb(+)(in) = Rb(+)(out). The catalysed reaction is Cs(+)(in) = Cs(+)(out). With respect to regulation, inhibited by Ba(2+), quinidine, chloroform and halothane. Activated at alkaline pH. Activated by quinine and isoflurane. Its function is as follows. K(+) channel that conducts voltage-dependent outward rectifying currents upon membrane depolarization. Voltage sensing is coupled to K(+) electrochemical gradient in an 'ion flux gating' mode where outward but not inward ion flow opens the gate. Homo- and heterodimerizes to form functional channels with distinct regulatory and gating properties. Present in the cardiac conduction system where it may regulate action potential duration and beating frequency of cardiac myocytes. Permeable to other monovalent cations such as Rb(+) and Cs(+). The polypeptide is Potassium channel subfamily K member 17 (Homo sapiens (Human)).